The sequence spans 218 residues: Ribonuclease HII (218 aa).

One can recognise an RNase H type-2 domain in the interval 23 to 216; the sequence is RFLCGVDEAG…VREAIARGLV (194 aa). Residues Asp-29, Glu-30, and Asp-125 each coordinate a divalent metal cation.

This sequence belongs to the RNase HII family. Mn(2+) serves as cofactor. Mg(2+) is required as a cofactor.

Its subcellular location is the cytoplasm. The catalysed reaction is Endonucleolytic cleavage to 5'-phosphomonoester.. Functionally, endonuclease that specifically degrades the RNA of RNA-DNA hybrids. This chain is Ribonuclease HII, found in Cupriavidus pinatubonensis (strain JMP 134 / LMG 1197) (Cupriavidus necator (strain JMP 134)).